The sequence spans 187 residues: HTH-type dhaKLM operon transcriptional activator DhaS (187 aa).

Residues 12-72 (IITQKIIAKA…WIFENDFAEL (61 aa)) form the HTH tetR-type domain. A DNA-binding region (H-T-H motif) is located at residues 35 to 54 (SVSDIMQTAKIRRQTFYNYF).

In terms of assembly, homodimer. Interacts with a homodimer of DhaQ.

In complex with DhaQ, upon activation by dihydroxyacetone, activates transcription of the dhaKLM operon. Binds the inverted repeat sequence 5'-GGACACATN(6)ATTTGTCC-3' located upstream of and partially overlapping with the -35 promoter sequence of the dhaKLM operon promoter. The protein is HTH-type dhaKLM operon transcriptional activator DhaS (dhaS) of Lactococcus lactis subsp. lactis (strain IL1403) (Streptococcus lactis).